The sequence spans 372 residues: Aminomethyltransferase (372 aa).

This sequence belongs to the GcvT family. The glycine cleavage system is composed of four proteins: P, T, L and H.

The catalysed reaction is N(6)-[(R)-S(8)-aminomethyldihydrolipoyl]-L-lysyl-[protein] + (6S)-5,6,7,8-tetrahydrofolate = N(6)-[(R)-dihydrolipoyl]-L-lysyl-[protein] + (6R)-5,10-methylene-5,6,7,8-tetrahydrofolate + NH4(+). Its function is as follows. The glycine cleavage system catalyzes the degradation of glycine. This is Aminomethyltransferase from Prochlorococcus marinus (strain NATL2A).